Here is a 156-residue protein sequence, read N- to C-terminus: Glutaredoxin-2, mitochondrial (156 aa).

Residues 1–19 constitute a mitochondrion transit peptide; the sequence is MSWRRAASVGRRLVASGRI. A Glutaredoxin domain is found at 50–150; that stretch reads VNQIQETISN…PLVHQCYLKK (101 aa). Residue cysteine 61 coordinates [2Fe-2S] cluster. Position 67 (lysine 67) interacts with glutathione. An S-glutathionyl cysteine; alternate modification is found at cysteine 70. An intrachain disulfide couples cysteine 70 to cysteine 73. Glutathione contacts are provided by glutamine 102 and valine 114. Cysteine 146 is a [2Fe-2S] cluster binding site.

Belongs to the glutaredoxin family. Monomer; active form. Homodimer; inactive form. The homodimer is probably linked by 1 2Fe-2S cluster. Widely expressed. Highly expressed in testis, and at much lower level in kidney and brain.

The protein resides in the mitochondrion. It is found in the nucleus. The 2Fe-2S present in the homodimer leads to inactivation of the enzyme. The 2Fe-2S may serve as a redox sensor: the presence of one-electron oxidants or reductants leading to the loss of the 2Fe-2S cluster, subsequent monomerization and activation of the enzyme. Functionally, glutathione-dependent oxidoreductase that facilitates the maintenance of mitochondrial redox homeostasis upon induction of apoptosis by oxidative stress. Involved in response to hydrogen peroxide and regulation of apoptosis caused by oxidative stress. Acts as a very efficient catalyst of monothiol reactions because of its high affinity for protein glutathione-mixed disulfides. Can receive electrons not only from glutathione (GSH), but also from thioredoxin reductase supporting both monothiol and dithiol reactions. Efficiently catalyzes both glutathionylation and deglutathionylation of mitochondrial complex I, which in turn regulates the superoxide production by the complex. Overexpression decreases the susceptibility to apoptosis and prevents loss of cardiolipin and cytochrome c release. This is Glutaredoxin-2, mitochondrial (Glrx2) from Mus musculus (Mouse).